A 286-amino-acid chain; its full sequence is uncharacterized protein (286 aa).

The next 2 membrane-spanning stretches (helical) occupy residues 201–221 and 231–251; these read VIYSITGAFSFIFGLGVLCET and AIILGFIILILILAIVNYLMM.

It localises to the cell membrane. This is an uncharacterized protein from Methanocaldococcus jannaschii (strain ATCC 43067 / DSM 2661 / JAL-1 / JCM 10045 / NBRC 100440) (Methanococcus jannaschii).